The primary structure comprises 124 residues: Fluoride-specific ion channel FluC (124 aa).

4 consecutive transmembrane segments (helical) span residues Val-4 to Phe-24, Phe-35 to Gly-55, Ile-60 to Ser-80, and Trp-95 to Leu-115. Na(+) contacts are provided by Gly-74 and Thr-77.

Belongs to the fluoride channel Fluc/FEX (TC 1.A.43) family.

It localises to the cell inner membrane. It carries out the reaction fluoride(in) = fluoride(out). Na(+) is not transported, but it plays an essential structural role and its presence is essential for fluoride channel function. Its function is as follows. Fluoride-specific ion channel. Important for reducing fluoride concentration in the cell, thus reducing its toxicity. This is Fluoride-specific ion channel FluC from Shewanella putrefaciens (strain CN-32 / ATCC BAA-453).